A 132-amino-acid polypeptide reads, in one-letter code: Small ribosomal subunit protein uS11 (132 aa).

Belongs to the universal ribosomal protein uS11 family. As to quaternary structure, part of the 30S ribosomal subunit. Interacts with proteins S7 and S18. Binds to IF-3.

Located on the platform of the 30S subunit, it bridges several disparate RNA helices of the 16S rRNA. Forms part of the Shine-Dalgarno cleft in the 70S ribosome. This is Small ribosomal subunit protein uS11 from Legionella pneumophila (strain Paris).